Here is an 87-residue protein sequence, read N- to C-terminus: MVNMKASMFLTFAGLVLLFVVCYAPESEEKEFPKEMLSSIFAVDNDFKQEERDCAGYMRECKEKLCCSGYVCSSRWKWCVLPAPWRR.

The signal sequence occupies residues 1–24 (MVNMKASMFLTFAGLVLLFVVCYA). Positions 25–52 (PESEEKEFPKEMLSSIFAVDNDFKQEER) are excised as a propeptide. 3 cysteine pairs are disulfide-bonded: cysteine 54–cysteine 67, cysteine 61–cysteine 72, and cysteine 66–cysteine 79.

This sequence belongs to the neurotoxin 10 (Hwtx-1) family. 51 (Hntx-8) subfamily. Hntx-8 sub-subfamily. In terms of tissue distribution, expressed by the venom gland.

The protein resides in the secreted. Its function is as follows. Ion channel inhibitor. This is U3-theraphotoxin-Hhn1a 3 from Cyriopagopus hainanus (Chinese bird spider).